The primary structure comprises 124 residues: Small ribosomal subunit protein uS12 (124 aa).

The disordered stretch occupies residues 8–30 (IRSARQDTEKQTKSPALKSCPQR). Position 89 is a 3-methylthioaspartic acid (Asp-89). The disordered stretch occupies residues 103 to 124 (DTAGVKDRKQSRSKYGAKKPKA). Residues 113 to 124 (SRSKYGAKKPKA) show a composition bias toward basic residues.

It belongs to the universal ribosomal protein uS12 family. Part of the 30S ribosomal subunit. Contacts proteins S8 and S17. May interact with IF1 in the 30S initiation complex.

With S4 and S5 plays an important role in translational accuracy. In terms of biological role, interacts with and stabilizes bases of the 16S rRNA that are involved in tRNA selection in the A site and with the mRNA backbone. Located at the interface of the 30S and 50S subunits, it traverses the body of the 30S subunit contacting proteins on the other side and probably holding the rRNA structure together. The combined cluster of proteins S8, S12 and S17 appears to hold together the shoulder and platform of the 30S subunit. The polypeptide is Small ribosomal subunit protein uS12 (Trichodesmium erythraeum (strain IMS101)).